Reading from the N-terminus, the 568-residue chain is Sulfite reductase [NADPH] hemoprotein beta-component (568 aa).

[4Fe-4S] cluster contacts are provided by cysteine 425, cysteine 431, cysteine 470, and cysteine 474. Cysteine 474 contacts siroheme.

The protein belongs to the nitrite and sulfite reductase 4Fe-4S domain family. Alpha(8)-beta(8). The alpha component is a flavoprotein, the beta component is a hemoprotein. Siroheme is required as a cofactor. It depends on [4Fe-4S] cluster as a cofactor.

It catalyses the reaction hydrogen sulfide + 3 NADP(+) + 3 H2O = sulfite + 3 NADPH + 4 H(+). The protein operates within sulfur metabolism; hydrogen sulfide biosynthesis; hydrogen sulfide from sulfite (NADPH route): step 1/1. Component of the sulfite reductase complex that catalyzes the 6-electron reduction of sulfite to sulfide. This is one of several activities required for the biosynthesis of L-cysteine from sulfate. The chain is Sulfite reductase [NADPH] hemoprotein beta-component from Xanthomonas oryzae pv. oryzae (strain MAFF 311018).